A 169-amino-acid chain; its full sequence is Der GTPase-activating protein YihI (169 aa).

2 disordered regions span residues 1–99 (MKPS…QAEL) and 146–169 (SYDD…LRGN). Residues 10–19 (SKGHAKARRK) show a composition bias toward basic residues. Basic and acidic residues predominate over residues 20–30 (TREELDQEARD). Over residues 31–40 (RKRQKKRRGH) the composition is skewed to basic residues. Residues 49–58 (GNTTSGSKGQ) show a composition bias toward polar residues. The segment covering 147–159 (YDDDEEEEEDEKQ) has biased composition (acidic residues). Residues 160–169 (EDMMRLLRGN) are compositionally biased toward basic and acidic residues.

This sequence belongs to the YihI family. In terms of assembly, interacts with Der.

Its function is as follows. A GTPase-activating protein (GAP) that modifies Der/EngA GTPase function. May play a role in ribosome biogenesis. The sequence is that of Der GTPase-activating protein YihI from Escherichia coli O81 (strain ED1a).